The primary structure comprises 191 residues: dTTP/UTP pyrophosphatase (191 aa).

Catalysis depends on D71, which acts as the Proton acceptor.

The protein belongs to the Maf family. YhdE subfamily. The cofactor is a divalent metal cation.

The protein localises to the cytoplasm. It catalyses the reaction dTTP + H2O = dTMP + diphosphate + H(+). It carries out the reaction UTP + H2O = UMP + diphosphate + H(+). Its function is as follows. Nucleoside triphosphate pyrophosphatase that hydrolyzes dTTP and UTP. May have a dual role in cell division arrest and in preventing the incorporation of modified nucleotides into cellular nucleic acids. The sequence is that of dTTP/UTP pyrophosphatase from Geobacter sulfurreducens (strain ATCC 51573 / DSM 12127 / PCA).